Reading from the N-terminus, the 300-residue chain is uncharacterized protein (300 aa).

The signal sequence occupies residues 1-19 (MKLKLLLIPLLGSSLLLSA). C20 is lipidated: N-palmitoyl cysteine. Residue C20 is the site of S-diacylglycerol cysteine attachment.

It belongs to the MG439/MG440 family.

Its subcellular location is the cell membrane. This is an uncharacterized protein from Mycoplasma pneumoniae (strain ATCC 29342 / M129 / Subtype 1) (Mycoplasmoides pneumoniae).